Reading from the N-terminus, the 160-residue chain is Pyruvoyl-dependent arginine decarboxylase (160 aa).

Residue Ser-39 is modified to Pyruvic acid (Ser).

Belongs to the PdaD family. Pyruvate serves as cofactor.

The enzyme catalyses L-arginine + H(+) = agmatine + CO2. The polypeptide is Pyruvoyl-dependent arginine decarboxylase (pdaD) (Halobacterium salinarum (strain ATCC 29341 / DSM 671 / R1)).